A 195-amino-acid chain; its full sequence is Phosphoheptose isomerase (195 aa).

The SIS domain maps to Leu-35–Asn-195. Asn-51–Gly-53 is a binding site for substrate. Zn(2+) is bound by residues His-60 and Glu-64. Residues Glu-64, Asn-93–Asp-94, Ser-119–Ser-121, Ser-124, and Gln-171 contribute to the substrate site. Zn(2+) is bound by residues Gln-171 and His-179.

It belongs to the SIS family. GmhA subfamily. Homotetramer. Zn(2+) serves as cofactor.

The protein localises to the cytoplasm. It carries out the reaction 2 D-sedoheptulose 7-phosphate = D-glycero-alpha-D-manno-heptose 7-phosphate + D-glycero-beta-D-manno-heptose 7-phosphate. It functions in the pathway carbohydrate biosynthesis; D-glycero-D-manno-heptose 7-phosphate biosynthesis; D-glycero-alpha-D-manno-heptose 7-phosphate and D-glycero-beta-D-manno-heptose 7-phosphate from sedoheptulose 7-phosphate: step 1/1. In terms of biological role, catalyzes the isomerization of sedoheptulose 7-phosphate in D-glycero-D-manno-heptose 7-phosphate. In Sulfurimonas denitrificans (strain ATCC 33889 / DSM 1251) (Thiomicrospira denitrificans (strain ATCC 33889 / DSM 1251)), this protein is Phosphoheptose isomerase.